We begin with the raw amino-acid sequence, 312 residues long: Ribosomal RNA small subunit methyltransferase H (312 aa).

Residues 32–34 (AGH), Asp52, Phe79, Asp100, and Gln107 contribute to the S-adenosyl-L-methionine site.

Belongs to the methyltransferase superfamily. RsmH family.

It is found in the cytoplasm. The catalysed reaction is cytidine(1402) in 16S rRNA + S-adenosyl-L-methionine = N(4)-methylcytidine(1402) in 16S rRNA + S-adenosyl-L-homocysteine + H(+). In terms of biological role, specifically methylates the N4 position of cytidine in position 1402 (C1402) of 16S rRNA. The polypeptide is Ribosomal RNA small subunit methyltransferase H (Listeria monocytogenes serotype 4b (strain F2365)).